Reading from the N-terminus, the 98-residue chain is NADH-ubiquinone oxidoreductase chain 4L (98 aa).

Helical transmembrane passes span 1–21 (MSMV…GLLM), 29–49 (SLLC…MVVL), and 61–81 (IILL…LVMV).

The protein belongs to the complex I subunit 4L family. Core subunit of respiratory chain NADH dehydrogenase (Complex I) which is composed of 45 different subunits.

It is found in the mitochondrion inner membrane. The catalysed reaction is a ubiquinone + NADH + 5 H(+)(in) = a ubiquinol + NAD(+) + 4 H(+)(out). Core subunit of the mitochondrial membrane respiratory chain NADH dehydrogenase (Complex I) which catalyzes electron transfer from NADH through the respiratory chain, using ubiquinone as an electron acceptor. Part of the enzyme membrane arm which is embedded in the lipid bilayer and involved in proton translocation. This Acinonyx jubatus (Cheetah) protein is NADH-ubiquinone oxidoreductase chain 4L (MT-ND4L).